Here is a 132-residue protein sequence, read N- to C-terminus: MSTHDPISDLITRIRNAQMRSKSKVSTPGSRMRASVLEVLKSEGYIRGYASVEHPSGRSELEIELKYFDGEPVIREIERVSRPGRRVYASVKNLPRVNNGLGISVLSTPKGIMADHDARDANVGGEVLFTVF.

This sequence belongs to the universal ribosomal protein uS8 family. In terms of assembly, part of the 30S ribosomal subunit. Contacts proteins S5 and S12.

Its function is as follows. One of the primary rRNA binding proteins, it binds directly to 16S rRNA central domain where it helps coordinate assembly of the platform of the 30S subunit. The sequence is that of Small ribosomal subunit protein uS8 from Rhodopseudomonas palustris (strain HaA2).